We begin with the raw amino-acid sequence, 157 residues long: Peptide methionine sulfoxide reductase MsrA (157 aa).

Residue Cys-13 is part of the active site.

The protein belongs to the MsrA Met sulfoxide reductase family.

The enzyme catalyses L-methionyl-[protein] + [thioredoxin]-disulfide + H2O = L-methionyl-(S)-S-oxide-[protein] + [thioredoxin]-dithiol. It catalyses the reaction [thioredoxin]-disulfide + L-methionine + H2O = L-methionine (S)-S-oxide + [thioredoxin]-dithiol. Functionally, has an important function as a repair enzyme for proteins that have been inactivated by oxidation. Catalyzes the reversible oxidation-reduction of methionine sulfoxide in proteins to methionine. The polypeptide is Peptide methionine sulfoxide reductase MsrA (Methanococcus maripaludis (strain C5 / ATCC BAA-1333)).